We begin with the raw amino-acid sequence, 284 residues long: RNase adapter protein RapZ (284 aa).

Glycine 8–serine 15 serves as a coordination point for ATP. Residue aspartate 56 to asparagine 59 coordinates GTP. The segment at arginine 266–serine 284 is RNA-binding.

Belongs to the RapZ-like family. RapZ subfamily. In terms of assembly, homotrimer.

In terms of biological role, modulates the synthesis of GlmS, by affecting the processing and stability of the regulatory small RNA GlmZ. When glucosamine-6-phosphate (GlcN6P) concentrations are high in the cell, RapZ binds GlmZ and targets it to cleavage by RNase E. Consequently, GlmZ is inactivated and unable to activate GlmS synthesis. Under low GlcN6P concentrations, RapZ is sequestered and inactivated by an other regulatory small RNA, GlmY, preventing GlmZ degradation and leading to synthesis of GlmS. This chain is RNase adapter protein RapZ, found in Klebsiella oxytoca.